A 392-amino-acid chain; its full sequence is Alanine--glyoxylate aminotransferase (392 aa).

Threonine 9 is subject to Phosphothreonine. Residue lysine 209 is modified to N6-(pyridoxal phosphate)lysine. Lysine 225 carries the N6-acetyllysine; alternate modification. Lysine 225 bears the N6-succinyllysine; alternate mark. An N6-acetyllysine mark is found at lysine 234 and lysine 312. Arginine 360 is a binding site for substrate.

The protein belongs to the class-V pyridoxal-phosphate-dependent aminotransferase family. Homodimer. Requires pyridoxal 5'-phosphate as cofactor. As to expression, liver.

The protein resides in the peroxisome. The enzyme catalyses L-serine + pyruvate = 3-hydroxypyruvate + L-alanine. The catalysed reaction is glyoxylate + L-alanine = glycine + pyruvate. With respect to regulation, alanine--glyoxylate aminotransferase activity is inhibited by 1 mM (aminooxy)acetic acid by 97.5%. In terms of biological role, peroxisomal aminotransferase that catalyzes the transamination of glyoxylate to glycine and contributes to the glyoxylate detoxification. Also catalyzes the transamination between L-serine and pyruvate and contributes to gluconeogenesis from the L-serine metabolism. The polypeptide is Alanine--glyoxylate aminotransferase (Homo sapiens (Human)).